Here is a 397-residue protein sequence, read N- to C-terminus: Phosphoglycerate kinase (397 aa).

Residues 21-23, arginine 37, 60-63, arginine 119, and arginine 152 contribute to the substrate site; these read DFN and HLGR. ATP-binding positions include lysine 203, glycine 294, glutamate 325, and 354-357; that span reads GGDS.

The protein belongs to the phosphoglycerate kinase family. In terms of assembly, monomer.

It is found in the cytoplasm. The catalysed reaction is (2R)-3-phosphoglycerate + ATP = (2R)-3-phospho-glyceroyl phosphate + ADP. It participates in carbohydrate degradation; glycolysis; pyruvate from D-glyceraldehyde 3-phosphate: step 2/5. The polypeptide is Phosphoglycerate kinase (Chlorobaculum tepidum (strain ATCC 49652 / DSM 12025 / NBRC 103806 / TLS) (Chlorobium tepidum)).